Here is a 158-residue protein sequence, read N- to C-terminus: MSDKTYLTKGGYNKLKDELDDLKTNVRQQVLEKITEAKSHGDLSENAEYEAAKEEQAQVESRISTLERVLSTATILDEKDIKTDKVYILTTVLLKDLDRDEEVEYTLVSSEEADSENGKISVKSPIGKNLLGKSVGEIVEIKVPKGIMRYEVLNIKVK.

The stretch at threonine 8 to threonine 74 forms a coiled coil.

This sequence belongs to the GreA/GreB family.

Functionally, necessary for efficient RNA polymerase transcription elongation past template-encoded arresting sites. The arresting sites in DNA have the property of trapping a certain fraction of elongating RNA polymerases that pass through, resulting in locked ternary complexes. Cleavage of the nascent transcript by cleavage factors such as GreA or GreB allows the resumption of elongation from the new 3'terminus. GreA releases sequences of 2 to 3 nucleotides. The sequence is that of Transcription elongation factor GreA from Chloroherpeton thalassium (strain ATCC 35110 / GB-78).